The sequence spans 210 residues: 7-carboxy-7-deazaguanine synthase (210 aa).

Residues 12–14 (LQG) and Arg27 each bind substrate. Positions 18–210 (QAGKAAVFCR…VQTHKYLGLP (193 aa)) constitute a Radical SAM core domain. Residues Cys31, Cys46, and Cys49 each contribute to the [4Fe-4S] cluster site. Residue Thr51 coordinates Mg(2+). Thr90 serves as a coordination point for substrate. S-adenosyl-L-methionine-binding positions include Gly92, 133–135 (SPK), and 173–176 (QPMD). Pro210 is a substrate binding site.

It belongs to the radical SAM superfamily. 7-carboxy-7-deazaguanine synthase family. Homodimer. It depends on [4Fe-4S] cluster as a cofactor. S-adenosyl-L-methionine is required as a cofactor. Requires Mg(2+) as cofactor.

The catalysed reaction is 6-carboxy-5,6,7,8-tetrahydropterin + H(+) = 7-carboxy-7-deazaguanine + NH4(+). It participates in purine metabolism; 7-cyano-7-deazaguanine biosynthesis. Its function is as follows. Catalyzes the complex heterocyclic radical-mediated conversion of 6-carboxy-5,6,7,8-tetrahydropterin (CPH4) to 7-carboxy-7-deazaguanine (CDG), a step common to the biosynthetic pathways of all 7-deazapurine-containing compounds. The polypeptide is 7-carboxy-7-deazaguanine synthase (Caulobacter vibrioides (strain ATCC 19089 / CIP 103742 / CB 15) (Caulobacter crescentus)).